A 628-amino-acid polypeptide reads, in one-letter code: Monoterpene synthase like 1, chloroplastic (628 aa).

Residues Asp379, Asp383, and Asp531 each contribute to the Mg(2+) site. Positions 379–383 (DDIYD) match the DDXXD motif motif.

It belongs to the terpene synthase family. Tpsd subfamily. Requires Mg(2+) as cofactor. The cofactor is Mn(2+).

Its subcellular location is the plastid. It localises to the chloroplast. It functions in the pathway terpene metabolism; oleoresin biosynthesis. It participates in secondary metabolite biosynthesis; terpenoid biosynthesis. Its function is as follows. Monoterpene synthase (TPS) involved in the biosynthesis of monoterpene natural products included in conifer oleoresin secretions and volatile emissions; these compounds contribute to biotic and abiotic stress defense against herbivores and pathogens. The chain is Monoterpene synthase like 1, chloroplastic from Pinus banksiana (Jack pine).